Consider the following 506-residue polypeptide: MTQAVMLQGTASDVGKSVLVAGLCRIFYQDGLRTAPFKSQNMALNSGITPDGKEMGRAQIFQAEAAGITPDVRMNPVLLKPTSDRQAQVVLMGKVATNMDAVSYHDYKPRLREQILAVYNSLAQEYDVIVLEGAGSPAEINLRDRDIVNMGMAEMAQCPVILVADIDRGGVFAAIYGTLALLHKQERDRVKGVIINKFRGDVALLYSGIEQIESLTGVPVLGVMPWLDVDLEDEDGVALQNDKYRGNAPRDITIAIVQLPHISNFTDFNALAAQPDVRIRYIRRPEALTDADLVILPGSKNTLSDLAWLRESGMADAVLQTHRQGVPVMGICGGYQMLGDTIVDEVESGLGTQPGLGLLNTITRFAQDKTTTQVNATMSGELPGWLAAAAGLPVRGYEIHMGETVLQEGCCTAMTLQKNGCSVADGAVTADGLAFGTYLHGLFDSDAFTRAVVNGLRARKGLAPWETTFCYAEHKARQFDLLAEAMRQHIDIDKIYTIMQQHQEPV.

Residues 251–448 (DITIAIVQLP…LHGLFDSDAF (198 aa)) enclose the GATase cobBQ-type domain. Catalysis depends on Cys-332, which acts as the Nucleophile. His-440 is an active-site residue.

It belongs to the CobB/CobQ family. CobQ subfamily.

It functions in the pathway cofactor biosynthesis; adenosylcobalamin biosynthesis. Its function is as follows. Catalyzes amidations at positions B, D, E, and G on adenosylcobyrinic A,C-diamide. NH(2) groups are provided by glutamine, and one molecule of ATP is hydrogenolyzed for each amidation. The sequence is that of Cobyric acid synthase from Salmonella heidelberg (strain SL476).